The primary structure comprises 555 residues: Glutamine--tRNA ligase (555 aa).

Residues 34–44 (PEPNGYLHIGH) carry the 'HIGH' region motif. ATP is bound by residues 35–37 (EPN) and 41–47 (HIGHAKS). Positions 67 and 212 each coordinate L-glutamine. Residues Thr231, 261 to 262 (RL), and 269 to 271 (MSK) each bind ATP. Positions 268-272 (VMSKR) match the 'KMSKS' region motif. The tract at residues 317–324 (TKQDNTIE) is interaction with tRNA.

This sequence belongs to the class-I aminoacyl-tRNA synthetase family. Monomer.

Its subcellular location is the cytoplasm. The catalysed reaction is tRNA(Gln) + L-glutamine + ATP = L-glutaminyl-tRNA(Gln) + AMP + diphosphate. This Salmonella paratyphi B (strain ATCC BAA-1250 / SPB7) protein is Glutamine--tRNA ligase.